A 393-amino-acid polypeptide reads, in one-letter code: Formate-dependent phosphoribosylglycinamide formyltransferase (393 aa).

Residues Glu15 to Leu16 and Glu75 each bind N(1)-(5-phospho-beta-D-ribosyl)glycinamide. Residues Arg107, Lys148, Ser153–Gln158, Glu188–Ile191, and Glu196 each bind ATP. Positions Asn112–Leu302 constitute an ATP-grasp domain. Glu261 and Glu273 together coordinate Mg(2+). N(1)-(5-phospho-beta-D-ribosyl)glycinamide-binding positions include Asp280, Lys350, and Arg357–Arg358.

Belongs to the PurK/PurT family. As to quaternary structure, homodimer.

It catalyses the reaction N(1)-(5-phospho-beta-D-ribosyl)glycinamide + formate + ATP = N(2)-formyl-N(1)-(5-phospho-beta-D-ribosyl)glycinamide + ADP + phosphate + H(+). Its pathway is purine metabolism; IMP biosynthesis via de novo pathway; N(2)-formyl-N(1)-(5-phospho-D-ribosyl)glycinamide from N(1)-(5-phospho-D-ribosyl)glycinamide (formate route): step 1/1. Functionally, involved in the de novo purine biosynthesis. Catalyzes the transfer of formate to 5-phospho-ribosyl-glycinamide (GAR), producing 5-phospho-ribosyl-N-formylglycinamide (FGAR). Formate is provided by PurU via hydrolysis of 10-formyl-tetrahydrofolate. The protein is Formate-dependent phosphoribosylglycinamide formyltransferase of Prochlorococcus marinus (strain SARG / CCMP1375 / SS120).